A 1126-amino-acid polypeptide reads, in one-letter code: NUT family member 1 (1126 aa).

Disordered stretches follow at residues 1-56, 334-367, 475-515, 537-559, 664-692, 755-810, and 932-1014; these read MASD…PVFS, IPKKAASKTRAPRRRQRKPQRPPVPEAPKEIPPE, EDAQ…QGAA, QEQTLGGPAGIHKDGNNLPSPSS, AGMLTRGREPPSVVSQKGSSRAVRGDDRG, ALNS…GPGL, and GEGR…EELS. A compositionally biased stretch (pro residues) spans 30 to 55; that stretch reads FAPPPPVPPDQPLWEPSPQPPIPPVF. Residues 338-353 show a composition bias toward basic residues; sequence AASKTRAPRRRQRKPQ. Polar residues predominate over residues 962–975; the sequence is KLTNGQGQGSTSPR. Phosphoserine is present on Ser-973. The span at 987–1005 shows a compositional bias: basic and acidic residues; it reads TPIKEKCTSADRAKRRETE. Phosphoserine occurs at positions 1022, 1025, and 1027. The tract at residues 1032-1126 is disordered; that stretch reads PLSTRQASGG…SKRKKRRRSQ (95 aa). At Gln-1042 the chain carries N5-methylglutamine. Basic residues predominate over residues 1106 to 1126; the sequence is PRKRRRDGFVTSKRKKRRRSQ.

This sequence belongs to the NUT family. In terms of processing, methylated at Gln-1042 by N6AMT1. Post-translationally, phosphorylation on Ser-1022, Ser-1025 or Ser-1027 is important for cytoplasmic export.

The protein resides in the cytoplasm. The protein localises to the nucleus. Its function is as follows. Plays a role in the regulation of proliferation. Regulates TERT expression by modulating SP1 binding to TERT promoter binding sites. The chain is NUT family member 1 from Mus musculus (Mouse).